Reading from the N-terminus, the 361-residue chain is Peptide chain release factor 1 (361 aa).

The residue at position 237 (Gln-237) is an N5-methylglutamine. Residues 287–297 (KQQKEQSDTRK) show a composition bias toward basic and acidic residues. The segment at 287 to 313 (KQQKEQSDTRKSLVGSGDRSERIRTYN) is disordered.

Belongs to the prokaryotic/mitochondrial release factor family. In terms of processing, methylated by PrmC. Methylation increases the termination efficiency of RF1.

The protein resides in the cytoplasm. Its function is as follows. Peptide chain release factor 1 directs the termination of translation in response to the peptide chain termination codons UAG and UAA. This is Peptide chain release factor 1 from Francisella tularensis subsp. tularensis (strain FSC 198).